A 988-amino-acid polypeptide reads, in one-letter code: UPF0182 protein MAB_3498c (988 aa).

Transmembrane regions (helical) follow at residues 19 to 39 (LVAA…LVDT), 63 to 83 (LALF…GFGL), 114 to 134 (LFLI…AQSY), 176 to 196 (FIAA…FGGI), 211 to 231 (IQLI…YWLD), 260 to 280 (KLIL…ALVL), and 288 to 308 (IGLA…PLIV).

It belongs to the UPF0182 family.

It is found in the cell membrane. The protein is UPF0182 protein MAB_3498c of Mycobacteroides abscessus (strain ATCC 19977 / DSM 44196 / CCUG 20993 / CIP 104536 / JCM 13569 / NCTC 13031 / TMC 1543 / L948) (Mycobacterium abscessus).